A 213-amino-acid chain; its full sequence is MGQKVHPYGFRLGYNKNWQSRWFSKKDYANFIYEDYKIRSYIKKLLYSAGISKMEIERAGGKICLMLSTARPGIVIGRKGVEIEKLRLELRKNFGQEFSLEVTEVRRPEVDAQLVAENIAMQLERRVAFRRAMKRTVSMARKFGAEGIKITCSGRLAGAEIARTEWYRDGRVPLQTLRADIDYGFAEAHTTYGIIGVKVWIYKGEVLDKEVEK.

The region spanning 38–106 is the KH type-2 domain; it reads IRSYIKKLLY…EFSLEVTEVR (69 aa).

Belongs to the universal ribosomal protein uS3 family. As to quaternary structure, part of the 30S ribosomal subunit. Forms a tight complex with proteins S10 and S14.

Its function is as follows. Binds the lower part of the 30S subunit head. Binds mRNA in the 70S ribosome, positioning it for translation. In Lawsonia intracellularis (strain PHE/MN1-00), this protein is Small ribosomal subunit protein uS3.